Here is a 177-residue protein sequence, read N- to C-terminus: B9 domain-containing protein 2 (177 aa).

The region spanning 2–118 (AEVHIIGQIL…EIGTWKVAPN (117 aa)) is the C2 B9-type domain.

It belongs to the B9D family. As to quaternary structure, probable component of the tectonic-like complex (also named MKS complex), composed of B9d1, B9d2, Cc2d2a, Mks1 and tctn. Expressed in chordotonal neurons in the antennae (at protein level). Expressed in spermatids (at protein level).

The protein localises to the cytoplasm. The protein resides in the cytoskeleton. Its subcellular location is the cilium basal body. Probable component of the tectonic-like complex (also named MKS complex), a complex localized at the transition zone of primary cilia. Has a role in ciliary structure and function. The protein is B9 domain-containing protein 2 of Drosophila melanogaster (Fruit fly).